Consider the following 1153-residue polypeptide: MLKVNYLFGCPNCNGSISVDRLHAGIPCETCLPGAVEKLDIRTIYDLLVKYSTLKGYSELYMDLEMYDDILRLFKKIVGGEPWSLQRYWLNKLVRGESFSLSAPTGVGKTTTLIVYSVYSHTTSLFVVPTKSLRDQICEKLKKIGHLVSCNKPEEDKVNVVTFHSINKNIDEFVRIKPKLLMVDDADMILKSGKTTERIAKVLQIPQEVFDDTIKMLRLKRMLRFKEDEDLINQVRELESKILGYKSSVQFIVSSATLKPKGYKQMALRFLVGFEPSTIQIYNRNVIDSFTYSNNVNELVKEIGDVGGLILVSKDYGKKYVDQITDNLNAEGYRAMKAISGRKFLEKFSNGDVDFLVGSASYYGVAVRGIDEPKRLKYVIFYGVPKTKLPLEDSLNNPLTALKIGELLKLDVTEYRKRLIYLSPAELQAVKIALRNKVSLNGKLGDLVEDLTKLKDIILDTIKANKIDKLVSDSFVIKKDTNKHYIFFPDIITYIQGSGRSSRIMNGGLTLGLSVVLVDDLELFDILNKKLRRIAEVTFMNFDELKLDEVREKLNKSRSDGSGGRSMNFKTALLVVESPTKARTISKIFGRGVRREIYGIPVYETIIIDDHSNTIIYTNIIASKGHLTDLTTEELGYYGVEINDKDIVVNYSPLYRCMSCGKTITKKVSTCPYCGSSMINSSEKIVNAIRLISTEVDEVYIATDPDQEGEKIAYDIYSLISPYNQNIFRISYNEITKTAVLNAIKSKAKINESLVKAQIARRIEDRWIGFELSSVLRSALNDNNNGTGRVQGPVLKWVVGKTSEYKANIGYVVDINIGDYVVRKFFKTKKDAETFISQLNVKVTKIAERTSTIDPLPPFTTDSLLIDAYSKFRINSSLAMKVAQELFEAGLITYHRTDSIHISPYGISIAREYLEKIGSNDFVGRSWGNEGAHEAIRPTRSMDVEELRKEIEENPFQFGIKFTWAHYRLYDLIFRRFIGSQMSSATATYTTYEININGELYTVELPTKVHGGFSSIYGIRVYNLDESHLTTRIRKGSLVSLLTYADVIRLMKDTNIGRPSTYVRTVQSLIRHGYVVESKKRSFLIATNKGQKVYEILNKYFSDMVSESRTSHLITKIDKINRNELSAEDVIMDLLNEIKNIKLVNPLQSEQYV.

The RG N-terminal-type zinc-finger motif lies at Met-1 to Ile-41. Zn(2+)-binding residues include Cys-10, Cys-13, Cys-28, and Cys-31. ATP is bound by residues Gln-86 and Ala-103–Thr-110. The region spanning Leu-90–Pro-276 is the Helicase ATP-binding domain. A DEAD box motif is present at residues Asp-184–Asp-187. The segment at Met-567–Val-1153 is topoisomerase I. A Toprim domain is found at Thr-571 to Ile-735. Mg(2+) is bound at residue Glu-577. The segment at Leu-654–Ser-681 adopts an RG C-terminal-type zinc-finger fold. Zn(2+) contacts are provided by Cys-657, Cys-660, Cys-671, and Cys-674. Asp-704 lines the Mg(2+) pocket. Residues Asn-751–Lys-1142 form the Topo IA-type catalytic domain. Residue Tyr-894 is the O-(5'-phospho-DNA)-tyrosine intermediate of the active site.

It in the N-terminal section; belongs to the DEAD box helicase family. DDVD subfamily. This sequence in the C-terminal section; belongs to the type IA topoisomerase family. Monomer. It depends on Zn(2+) as a cofactor. Mg(2+) serves as cofactor.

The protein localises to the cytoplasm. The enzyme catalyses ATP + H2O = ADP + phosphate + H(+). Functionally, modifies the topological state of DNA by introducing positive supercoils in an ATP-dependent process, increasing the linking number in steps of +1. Binds to single-stranded DNA, transiently cleaves and then rejoins the ends, introducing a positive supercoil in the process. The scissile phosphodiester is attacked by the catalytic tyrosine of the enzyme, resulting in the formation of a DNA-(5'-phosphotyrosyl)-enzyme intermediate. Probably involved in rewinding DNA strands in regions of the chromosome that have opened up to allow replication, transcription, DNA repair and/or for DNA protection. In terms of biological role, might be a cell cycle protein. The protein is Reverse gyrase 2 of Sulfolobus acidocaldarius (strain ATCC 33909 / DSM 639 / JCM 8929 / NBRC 15157 / NCIMB 11770).